Here is a 431-residue protein sequence, read N- to C-terminus: Enolase (431 aa).

Q167 provides a ligand contact to (2R)-2-phosphoglycerate. E209 serves as the catalytic Proton donor. The Mg(2+) site is built by D246, E289, and D316. The (2R)-2-phosphoglycerate site is built by K341, R370, S371, and K392. K341 functions as the Proton acceptor in the catalytic mechanism.

This sequence belongs to the enolase family. In terms of assembly, component of the RNA degradosome, a multiprotein complex involved in RNA processing and mRNA degradation. Requires Mg(2+) as cofactor.

It is found in the cytoplasm. The protein localises to the secreted. Its subcellular location is the cell surface. It carries out the reaction (2R)-2-phosphoglycerate = phosphoenolpyruvate + H2O. Its pathway is carbohydrate degradation; glycolysis; pyruvate from D-glyceraldehyde 3-phosphate: step 4/5. Catalyzes the reversible conversion of 2-phosphoglycerate (2-PG) into phosphoenolpyruvate (PEP). It is essential for the degradation of carbohydrates via glycolysis. The sequence is that of Enolase from Shewanella pealeana (strain ATCC 700345 / ANG-SQ1).